Consider the following 431-residue polypeptide: O-methyltransferase gliM (431 aa).

Residues 20–85 (EFKAIVNDLR…SMDKLQLQLV (66 aa)) adopt a coiled-coil conformation. Residues D287 and 319 to 321 (GDF) each bind S-adenosyl-L-methionine. Catalysis depends on H338, which acts as the Proton acceptor.

This sequence belongs to the class I-like SAM-binding methyltransferase superfamily. Cation-independent O-methyltransferase family. COMT subfamily.

The protein operates within mycotoxin biosynthesis. O-methyltransferase; part of the gene cluster that mediates the biosynthesis of gliotoxin, a member of the epipolythiodioxopiperazine (ETP) class of toxins characterized by a disulfide bridged cyclic dipeptide. The first step in gliotoxin biosynthesis is the condensation of serine and phenylalanine to form the cyclo-L-phenylalanyl-L-serine diketopiperazine (DKP) by the NRPS gliP. GliP is also able to produce the DKP cyclo-L-tryptophanyl-L-serine, suggesting that the substrate specificity of the first adenylation (A) domain in gliP is sufficiently relaxed to accommodate both L-Phe and L-Trp. The cytochrome P450 monooxygenase gliC has been shown to catalyze the subsequent hydroxylation of the alpha-carbon of L-Phe in cyclo-L-phenylalanyl-L-serine whereas the second cytochrome P450 enzyme, gliF, is presumably involved in the modification of the DKP side chain. The glutathione S-transferase (GST) gliG then forms a bis-glutathionylated biosynthetic intermediate which is responsible for the sulfurization of gliotoxin. This bis-glutathionylated intermediate is subsequently processed by the gamma-glutamyl cyclotransferase gliK to remove both gamma-glutamyl moieties. Subsequent processing via gliI yields a biosynthetic intermediate, which is N-methylated via the N-methyltransferase gliN, before the gliotoxin oxidoreductase gliT-mediated disulfide bridge closure. GliN-mediated amide methylation confers stability to ETP, damping the spontaneous formation of tri- and tetrasulfides. Intracellular dithiol gliotoxin oxidized by gliT is subsequently effluxed by gliA. Gliotoxin contributes to pathogenesis during invasive aspergillosis. In macrophages and neutrophils, gliotoxin showed inhibition of various different cell functions including cytokine production, antigen presentation, phagocytosis, and production of reactive oxygen species. This chain is O-methyltransferase gliM, found in Aspergillus fumigatus (strain ATCC MYA-4609 / CBS 101355 / FGSC A1100 / Af293) (Neosartorya fumigata).